The sequence spans 709 residues: Homeobox-leucine zipper protein HDG4 (709 aa).

The segment at 61–92 (ESGSGKSTGSGHDPVENTAIEQEPPAAKKKRY) is disordered. Residues 88-147 (KKKRYHRHTASQIQQMEALFKENAHPDTKTRLRLSKKLGLSPIQVKFWFQNKRTQIKAQQ) constitute a DNA-binding region (homeobox). Residues 137-205 (QNKRTQIKAQ…LDRLRSIVSM (69 aa)) are a coiled coil. An START domain is found at 229-466 (AEEEKAIDME…LKRQCERMAS (238 aa)).

This sequence belongs to the HD-ZIP homeobox family. Class IV subfamily. Expressed in flowers.

It is found in the nucleus. Probable transcription factor. The polypeptide is Homeobox-leucine zipper protein HDG4 (Arabidopsis thaliana (Mouse-ear cress)).